The chain runs to 700 residues: Calpain-2 catalytic subunit (700 aa).

At Ala2 the chain carries N-acetylalanine. The propeptide at Ala2–Gly19 is anchors to the small subunit. Residues Leu45–Thr344 enclose the Calpain catalytic domain. Ca(2+)-binding residues include Ile89, Gly91, and Asp96. Residue Cys105 is part of the active site. Residues Glu175, Gln229, and Lys230 each coordinate Ca(2+). Residues His262 and Asn286 contribute to the active site. Ca(2+) contacts are provided by Glu292, Asp299, Gln319, and Glu323. Positions Pro345–Asp514 are domain III. Residues Glu515–Asp529 form a linker region. Positions Ile530–Leu700 are domain IV. Positions 542, 545, 547, 552, 585, 587, 589, 591, 596, 615, 617, 619, 621, 626, 658, and 661 each coordinate Ca(2+). EF-hand domains lie at Phe572 to Gln605 and Thr602 to Lys637. Residues Val667 to Leu700 enclose the EF-hand 3 domain.

This sequence belongs to the peptidase C2 family. In terms of assembly, forms a heterodimer with a small (regulatory) subunit (CAPNS1). Interacts with CPEB3; this leads to cleavage of CPEB3. Ca(2+) is required as a cofactor. Ubiquitous.

It is found in the cytoplasm. It localises to the cell membrane. The catalysed reaction is Broad endopeptidase specificity.. With respect to regulation, activated by 200-1000 micromolar concentrations of calcium and inhibited by calpastatin. Its function is as follows. Calcium-regulated non-lysosomal thiol-protease which catalyze limited proteolysis of substrates involved in cytoskeletal remodeling and signal transduction. Proteolytically cleaves MYOC at 'Arg-226'. Proteolytically cleaves CPEB3 following neuronal stimulation which abolishes CPEB3 translational repressor activity, leading to translation of CPEB3 target mRNAs. In Rattus norvegicus (Rat), this protein is Calpain-2 catalytic subunit (Capn2).